The chain runs to 394 residues: Ribulose bisphosphate carboxylase large chain (394 aa).

Lys5 bears the N6,N6,N6-trimethyllysine mark. The substrate site is built by Asn114 and Thr164. Catalysis depends on Lys166, which acts as the Proton acceptor. Lys168 serves as a coordination point for substrate. Lys192, Asp194, and Glu195 together coordinate Mg(2+). Lys192 carries the post-translational modification N6-carboxylysine. His285 serves as the catalytic Proton acceptor. The substrate site is built by Arg286, His318, and Ser370.

Belongs to the RuBisCO large chain family. Type I subfamily. Heterohexadecamer of 8 large chains and 8 small chains; disulfide-linked. The disulfide link is formed within the large subunit homodimers. Mg(2+) serves as cofactor. Post-translationally, the disulfide bond which can form in the large chain dimeric partners within the hexadecamer appears to be associated with oxidative stress and protein turnover.

It is found in the plastid. The protein localises to the chloroplast. The catalysed reaction is 2 (2R)-3-phosphoglycerate + 2 H(+) = D-ribulose 1,5-bisphosphate + CO2 + H2O. It catalyses the reaction D-ribulose 1,5-bisphosphate + O2 = 2-phosphoglycolate + (2R)-3-phosphoglycerate + 2 H(+). In terms of biological role, ruBisCO catalyzes two reactions: the carboxylation of D-ribulose 1,5-bisphosphate, the primary event in carbon dioxide fixation, as well as the oxidative fragmentation of the pentose substrate in the photorespiration process. Both reactions occur simultaneously and in competition at the same active site. The sequence is that of Ribulose bisphosphate carboxylase large chain (rbcL) from Nelumbo lutea (American lotus).